The chain runs to 149 residues: Large ribosomal subunit protein uL13 (149 aa).

It belongs to the universal ribosomal protein uL13 family. As to quaternary structure, part of the 50S ribosomal subunit.

This protein is one of the early assembly proteins of the 50S ribosomal subunit, although it is not seen to bind rRNA by itself. It is important during the early stages of 50S assembly. The protein is Large ribosomal subunit protein uL13 of Bifidobacterium longum (strain DJO10A).